Consider the following 2259-residue polypeptide: Golgin subfamily A member 4 (2259 aa).

A disordered region spans residues 1 to 54; sequence MFKKLKQKISEEQQQLQQALAPAQASSSSSTPTRTRSRTSSFTDQLDDATPNRE. S10 carries the phosphoserine modification. Positions 12–41 are enriched in low complexity; the sequence is EQQQLQQALAPAQASSSSSTPTRTRSRTSS. Residue T39 is modified to Phosphothreonine. Phosphoserine is present on residues S41, S104, and S111. The tract at residues 165–235 is interaction with MACF1; that stretch reads SLSREQLLQR…EELQMDQQAK (71 aa). A coiled-coil region spans residues 167–2182; it reads SREQLLQRLR…SYEKSVCAAA (2016 aa). Composition is skewed to basic and acidic residues over residues 1932-1946 and 1954-1977; these read LEDR…HVIE and DGRH…LSKE. The interval 1932–1977 is disordered; sequence LEDRPEENSKSHVIESKLGTPMDGRHSDLESKLAGSEREKQKLSKE. Residues 2199-2246 form the GRIP domain; sequence LFGEPTEFEYLRKVLFEYMMGRETKTMAKVITTVLRFPDDQAQKILER.

Homodimer. Interacts with GTP-bound ARL1 and ARL3. Interacts with MACF1. Directly interacts with TBC1D23. Interacts with FAM91A1; this interaction may be mediated by TBC1D23. Expressed in the head of epididymal sperm but not in testicular sperm (at protein level).

The protein resides in the cytoplasm. The protein localises to the golgi apparatus membrane. It is found in the golgi apparatus. Its subcellular location is the trans-Golgi network membrane. In terms of biological role, involved in vesicular trafficking at the Golgi apparatus level. May play a role in delivery of transport vesicles containing GPI-linked proteins from the trans-Golgi network through its interaction with MACF1. Involved in endosome-to-Golgi trafficking. This chain is Golgin subfamily A member 4, found in Rattus norvegicus (Rat).